The chain runs to 315 residues: Protein ADP-ribosyltransferase (315 aa).

Residues 13–299 enclose the Deacetylase sirtuin-type domain; sequence LMDEKTKQAE…TTALRNDSTT (287 aa). NAD(+) contacts are provided by residues Ala-40, 123 to 126, and Gln-143; that span reads TNAD. The Zn(2+) site is built by Cys-151, Cys-155, Cys-186, and Cys-189. Residues 238-240, Asn-264, Tyr-268, and Ile-285 each bind NAD(+); that span reads YTT.

This sequence belongs to the sirtuin family. Class M subfamily. Requires Zn(2+) as cofactor.

The catalysed reaction is L-aspartyl-[protein] + NAD(+) = 4-O-(ADP-D-ribosyl)-L-aspartyl-[protein] + nicotinamide. Its activity is regulated as follows. Is inhibited by Tenovin-6 in vitro, but not by nicotinamide. In terms of biological role, catalyzes specifically the mono-ADP-ribosylation of GcvH-L (SAV0324). This activity is dependent on prior lipoylation of the target protein. May be involved in the modulation of the response to host-derived oxidative stress. In contrast to other sirtuin classes, lacks protein deacylase activity, being unable to catalyze delipoylation, debiotinylation, deacetylation and desuccinylation of proteins. The protein is Protein ADP-ribosyltransferase of Staphylococcus aureus (strain Mu50 / ATCC 700699).